The chain runs to 133 residues: UPF0102 protein CYA_0680 (133 aa).

Belongs to the UPF0102 family.

In Synechococcus sp. (strain JA-3-3Ab) (Cyanobacteria bacterium Yellowstone A-Prime), this protein is UPF0102 protein CYA_0680.